The following is a 312-amino-acid chain: tRNA dimethylallyltransferase (312 aa).

17–24 (GPTASGKS) contributes to the ATP binding site. Residue 19–24 (TASGKS) coordinates substrate.

The protein belongs to the IPP transferase family. In terms of assembly, monomer. The cofactor is Mg(2+).

The enzyme catalyses adenosine(37) in tRNA + dimethylallyl diphosphate = N(6)-dimethylallyladenosine(37) in tRNA + diphosphate. In terms of biological role, catalyzes the transfer of a dimethylallyl group onto the adenine at position 37 in tRNAs that read codons beginning with uridine, leading to the formation of N6-(dimethylallyl)adenosine (i(6)A). The chain is tRNA dimethylallyltransferase from Zymomonas mobilis subsp. mobilis (strain ATCC 31821 / ZM4 / CP4).